Here is a 177-residue protein sequence, read N- to C-terminus: Nucleoside triphosphate/diphosphate phosphatase (177 aa).

Residue Arg23 is the Proton donor of the active site. Mg(2+)-binding residues include Asn87, Asp103, Asp105, Asp107, Asp120, and Glu123.

Belongs to the Ntdp family. Mg(2+) is required as a cofactor.

The catalysed reaction is a ribonucleoside 5'-triphosphate + H2O = a ribonucleoside 5'-diphosphate + phosphate + H(+). It carries out the reaction a ribonucleoside 5'-diphosphate + H2O = a ribonucleoside 5'-phosphate + phosphate + H(+). Its function is as follows. Has nucleoside phosphatase activity towards nucleoside triphosphates and nucleoside diphosphates. The protein is Nucleoside triphosphate/diphosphate phosphatase of Enterococcus faecalis (strain ATCC 700802 / V583).